A 366-amino-acid chain; its full sequence is Ribosomal RNA large subunit methyltransferase M (366 aa).

S-adenosyl-L-methionine is bound by residues S188, 221–224 (CPGG), D240, D260, and D277. K306 (proton acceptor) is an active-site residue.

It belongs to the class I-like SAM-binding methyltransferase superfamily. RNA methyltransferase RlmE family. RlmM subfamily. As to quaternary structure, monomer.

The protein localises to the cytoplasm. It carries out the reaction cytidine(2498) in 23S rRNA + S-adenosyl-L-methionine = 2'-O-methylcytidine(2498) in 23S rRNA + S-adenosyl-L-homocysteine + H(+). In terms of biological role, catalyzes the 2'-O-methylation at nucleotide C2498 in 23S rRNA. The polypeptide is Ribosomal RNA large subunit methyltransferase M (Escherichia fergusonii (strain ATCC 35469 / DSM 13698 / CCUG 18766 / IAM 14443 / JCM 21226 / LMG 7866 / NBRC 102419 / NCTC 12128 / CDC 0568-73)).